The sequence spans 406 residues: Peptidase T (406 aa).

His-81 lines the Zn(2+) pocket. The active site involves Asp-83. Asp-142 provides a ligand contact to Zn(2+). Glu-176 acts as the Proton acceptor in catalysis. Zn(2+)-binding residues include Glu-177, Asp-199, and His-381.

This sequence belongs to the peptidase M20B family. Zn(2+) is required as a cofactor.

It is found in the cytoplasm. It catalyses the reaction Release of the N-terminal residue from a tripeptide.. Its function is as follows. Cleaves the N-terminal amino acid of tripeptides. The protein is Peptidase T of Streptococcus pneumoniae serotype 2 (strain D39 / NCTC 7466).